The chain runs to 365 residues: Cobalt-precorrin-5B C(1)-methyltransferase (365 aa).

This sequence belongs to the CbiD family.

The catalysed reaction is Co-precorrin-5B + S-adenosyl-L-methionine = Co-precorrin-6A + S-adenosyl-L-homocysteine. It participates in cofactor biosynthesis; adenosylcobalamin biosynthesis; cob(II)yrinate a,c-diamide from sirohydrochlorin (anaerobic route): step 6/10. Functionally, catalyzes the methylation of C-1 in cobalt-precorrin-5B to form cobalt-precorrin-6A. The chain is Cobalt-precorrin-5B C(1)-methyltransferase from Geobacillus sp. (strain WCH70).